A 178-amino-acid polypeptide reads, in one-letter code: ATP synthase subunit delta (178 aa).

Belongs to the ATPase delta chain family. F-type ATPases have 2 components, F(1) - the catalytic core - and F(0) - the membrane proton channel. F(1) has five subunits: alpha(3), beta(3), gamma(1), delta(1), epsilon(1). F(0) has three main subunits: a(1), b(2) and c(10-14). The alpha and beta chains form an alternating ring which encloses part of the gamma chain. F(1) is attached to F(0) by a central stalk formed by the gamma and epsilon chains, while a peripheral stalk is formed by the delta and b chains.

It localises to the cell inner membrane. In terms of biological role, f(1)F(0) ATP synthase produces ATP from ADP in the presence of a proton or sodium gradient. F-type ATPases consist of two structural domains, F(1) containing the extramembraneous catalytic core and F(0) containing the membrane proton channel, linked together by a central stalk and a peripheral stalk. During catalysis, ATP synthesis in the catalytic domain of F(1) is coupled via a rotary mechanism of the central stalk subunits to proton translocation. Functionally, this protein is part of the stalk that links CF(0) to CF(1). It either transmits conformational changes from CF(0) to CF(1) or is implicated in proton conduction. The chain is ATP synthase subunit delta from Pelodictyon phaeoclathratiforme (strain DSM 5477 / BU-1).